The chain runs to 78 residues: Large ribosomal subunit protein bL28 (78 aa).

It belongs to the bacterial ribosomal protein bL28 family.

In Ruthia magnifica subsp. Calyptogena magnifica, this protein is Large ribosomal subunit protein bL28.